A 113-amino-acid chain; its full sequence is Transcriptional regulator RamA (113 aa).

The HTH araC/xylS-type domain maps to 9 to 107 (DTIVEWIDDN…NLPPGAYRKE (99 aa)). 2 DNA-binding regions (H-T-H motif) span residues 26 to 47 (DDIA…MQYK) and 74 to 97 (VYDI…TRTF).

In terms of biological role, transcriptional regulator. Binds to regulatory regions of target genes, including efflux pump operon acrAB and outer membrane protein gene tolC. Represses transcription of genes belonging to the flagellar regulon, including flhD, flhB and fliC; probably thereby leading to repression of motility. Represses expression of the flhDC operon in a post-transcriptional manner. Activates expression of acrAB, perhaps thereby conferring multidrug resistance. Involved in indole- and bile-mediated regulation of acrAB; binding of bile to RamA may contribute to activation of expression of acrAB. Plays a role in regulating virulence in mice. This Salmonella typhimurium (strain LT2 / SGSC1412 / ATCC 700720) protein is Transcriptional regulator RamA.